The sequence spans 219 residues: 2-hydroxy-3-keto-5-methylthiopentenyl-1-phosphate phosphatase (219 aa).

It belongs to the HAD-like hydrolase superfamily. MtnX family.

The enzyme catalyses 2-hydroxy-5-methylsulfanyl-3-oxopent-1-enyl phosphate + H2O = 1,2-dihydroxy-5-(methylsulfanyl)pent-1-en-3-one + phosphate. It functions in the pathway amino-acid biosynthesis; L-methionine biosynthesis via salvage pathway; L-methionine from S-methyl-5-thio-alpha-D-ribose 1-phosphate: step 4/6. Dephosphorylates 2-hydroxy-3-keto-5-methylthiopentenyl-1-phosphate (HK-MTPenyl-1-P) yielding 1,2-dihydroxy-3-keto-5-methylthiopentene (DHK-MTPene). In Bacillus anthracis (strain A0248), this protein is 2-hydroxy-3-keto-5-methylthiopentenyl-1-phosphate phosphatase.